The chain runs to 194 residues: Troponin I 4 (194 aa).

Residues M1–E27 form a disordered region. A compositionally biased stretch (basic and acidic residues) spans D7 to E27.

This sequence belongs to the troponin I family. As to expression, expression is detected only in pharyngeal muscle cells from embryos to adults.

Its function is as follows. Troponin I is the inhibitory subunit of troponin, the thin filament regulatory complex which confers calcium-sensitivity to muscle actomyosin ATPase activity. The sequence is that of Troponin I 4 (tni-4) from Caenorhabditis elegans.